An 861-amino-acid chain; its full sequence is Leucine--tRNA ligase (861 aa).

The 'HIGH' region motif lies at P42 to H52. Residues K619–S623 carry the 'KMSKS' region motif. An ATP-binding site is contributed by K622.

The protein belongs to the class-I aminoacyl-tRNA synthetase family.

The protein localises to the cytoplasm. The enzyme catalyses tRNA(Leu) + L-leucine + ATP = L-leucyl-tRNA(Leu) + AMP + diphosphate. In Haemophilus ducreyi (strain 35000HP / ATCC 700724), this protein is Leucine--tRNA ligase.